The primary structure comprises 446 residues: Probable 1,4-beta-D-glucan cellobiohydrolase A (446 aa).

The first 17 residues, M1 to A17, serve as a signal peptide directing secretion. N-linked (GlcNAc...) asparagine glycosylation is present at N81. Catalysis depends on E226, which acts as the Nucleophile. The active-site Proton donor is E231. N284 and N333 each carry an N-linked (GlcNAc...) asparagine glycan. The tract at residues T399–P420 is disordered.

This sequence belongs to the glycosyl hydrolase 7 (cellulase C) family.

Its subcellular location is the secreted. The catalysed reaction is Hydrolysis of (1-&gt;4)-beta-D-glucosidic linkages in cellulose and cellotetraose, releasing cellobiose from the non-reducing ends of the chains.. The biological conversion of cellulose to glucose generally requires three types of hydrolytic enzymes: (1) Endoglucanases which cut internal beta-1,4-glucosidic bonds; (2) Exocellobiohydrolases that cut the disaccharide cellobiose from the non-reducing end of the cellulose polymer chain; (3) Beta-1,4-glucosidases which hydrolyze the cellobiose and other short cello-oligosaccharides to glucose. This chain is Probable 1,4-beta-D-glucan cellobiohydrolase A (cbhA), found in Emericella nidulans (strain FGSC A4 / ATCC 38163 / CBS 112.46 / NRRL 194 / M139) (Aspergillus nidulans).